We begin with the raw amino-acid sequence, 112 residues long: Iron-sulfur cluster insertion protein ErpA (112 aa).

The iron-sulfur cluster site is built by C40, C104, and C106.

It belongs to the HesB/IscA family. Homodimer. Iron-sulfur cluster is required as a cofactor.

Required for insertion of 4Fe-4S clusters for at least IspG. This chain is Iron-sulfur cluster insertion protein ErpA, found in Pseudoalteromonas translucida (strain TAC 125).